The chain runs to 111 residues: MKKSYRVKKEKDFKALFDAGHSVANRKFVVYCLDRNLPHFRVGLSVSKRLGNAVTRNRVKRRLRHALMDMSSQLENQDFVVIARKGVEDLSYQDIYSNLVHVLKIAKLYKD.

Belongs to the RnpA family. In terms of assembly, consists of a catalytic RNA component (M1 or rnpB) and a protein subunit.

It carries out the reaction Endonucleolytic cleavage of RNA, removing 5'-extranucleotides from tRNA precursor.. Its function is as follows. RNaseP catalyzes the removal of the 5'-leader sequence from pre-tRNA to produce the mature 5'-terminus. It can also cleave other RNA substrates such as 4.5S RNA. The protein component plays an auxiliary but essential role in vivo by binding to the 5'-leader sequence and broadening the substrate specificity of the ribozyme. The polypeptide is Ribonuclease P protein component (Streptococcus thermophilus (strain ATCC BAA-491 / LMD-9)).